The sequence spans 272 residues: Orotidine 5'-phosphate decarboxylase (272 aa).

Lys-95 acts as the Proton donor in catalysis.

This sequence belongs to the OMP decarboxylase family. Type 2 subfamily.

The enzyme catalyses orotidine 5'-phosphate + H(+) = UMP + CO2. Its pathway is pyrimidine metabolism; UMP biosynthesis via de novo pathway; UMP from orotate: step 2/2. The polypeptide is Orotidine 5'-phosphate decarboxylase (Cupriavidus necator (strain ATCC 17699 / DSM 428 / KCTC 22496 / NCIMB 10442 / H16 / Stanier 337) (Ralstonia eutropha)).